The following is a 381-amino-acid chain: tRNA pseudouridine synthase D (381 aa).

D81 (nucleophile) is an active-site residue. In terms of domain architecture, TRUD spans 160–335 (GMPNYFGSQR…TLGSRRFFWV (176 aa)).

The protein belongs to the pseudouridine synthase TruD family.

The catalysed reaction is uridine(13) in tRNA = pseudouridine(13) in tRNA. Its function is as follows. Responsible for synthesis of pseudouridine from uracil-13 in transfer RNAs. The sequence is that of tRNA pseudouridine synthase D from Helicobacter pylori (strain HPAG1).